We begin with the raw amino-acid sequence, 483 residues long: Malonate-semialdehyde dehydrogenase 2 (483 aa).

F152, K176, E179, R180, and S229 together coordinate NAD(+). C284 serves as the catalytic Nucleophile. E384 is a binding site for NAD(+).

It belongs to the aldehyde dehydrogenase family. IolA subfamily. Homotetramer.

The enzyme catalyses 3-oxopropanoate + NAD(+) + CoA + H2O = hydrogencarbonate + acetyl-CoA + NADH + H(+). The catalysed reaction is 2-methyl-3-oxopropanoate + NAD(+) + CoA + H2O = propanoyl-CoA + hydrogencarbonate + NADH + H(+). Its pathway is polyol metabolism; myo-inositol degradation into acetyl-CoA; acetyl-CoA from myo-inositol: step 7/7. Catalyzes the oxidation of malonate semialdehyde (MSA) and methylmalonate semialdehyde (MMSA) into acetyl-CoA and propanoyl-CoA, respectively. Is involved in a myo-inositol catabolic pathway. Bicarbonate, and not CO2, is the end-product of the enzymatic reaction. The protein is Malonate-semialdehyde dehydrogenase 2 of Bacillus mycoides (strain KBAB4) (Bacillus weihenstephanensis).